Reading from the N-terminus, the 207-residue chain is Guanylate kinase (207 aa).

One can recognise a Guanylate kinase-like domain in the interval G4–R184. A11–S18 serves as a coordination point for ATP.

It belongs to the guanylate kinase family.

It localises to the cytoplasm. The catalysed reaction is GMP + ATP = GDP + ADP. The enzyme catalyses dZMP + ATP = dZDP + ADP. It functions in the pathway purine metabolism. Essential for recycling GMP and indirectly, cGMP. In terms of biological role, (Microbial infection) Catalyzes the phosphorylation of dZMP to dZDP, when the bacterium is infected by a phage that produces the substrate for the synthesis of dZTP (2- amino-2'-deoxyadenosine 5'-triphosphate), which is then used by the phage as a DNA polymerase substrate. This is Guanylate kinase (gmk) from Vibrio cholerae serotype O1 (strain ATCC 39315 / El Tor Inaba N16961).